The following is a 162-amino-acid chain: Shikimate kinase (162 aa).

11 to 16 serves as a coordination point for ATP; that stretch reads GSGKSS. Ser-15 is a Mg(2+) binding site. Positions 33, 57, and 80 each coordinate substrate. Position 116 (Arg-116) interacts with ATP. A substrate-binding site is contributed by Arg-132.

Belongs to the shikimate kinase family. In terms of assembly, monomer. The cofactor is Mg(2+).

Its subcellular location is the cytoplasm. It carries out the reaction shikimate + ATP = 3-phosphoshikimate + ADP + H(+). The protein operates within metabolic intermediate biosynthesis; chorismate biosynthesis; chorismate from D-erythrose 4-phosphate and phosphoenolpyruvate: step 5/7. Catalyzes the specific phosphorylation of the 3-hydroxyl group of shikimic acid using ATP as a cosubstrate. The polypeptide is Shikimate kinase (Helicobacter pylori (strain G27)).